A 588-amino-acid chain; its full sequence is 2-succinyl-5-enolpyruvyl-6-hydroxy-3-cyclohexene-1-carboxylate synthase (588 aa).

A disordered region spans residues 1-22 (MTTTGSLPAQPSSTSPRTGNPS).

The protein belongs to the TPP enzyme family. MenD subfamily. As to quaternary structure, homodimer. Mg(2+) serves as cofactor. Requires Mn(2+) as cofactor. It depends on thiamine diphosphate as a cofactor.

It carries out the reaction isochorismate + 2-oxoglutarate + H(+) = 5-enolpyruvoyl-6-hydroxy-2-succinyl-cyclohex-3-ene-1-carboxylate + CO2. It participates in quinol/quinone metabolism; 1,4-dihydroxy-2-naphthoate biosynthesis; 1,4-dihydroxy-2-naphthoate from chorismate: step 2/7. It functions in the pathway quinol/quinone metabolism; menaquinone biosynthesis. Functionally, catalyzes the thiamine diphosphate-dependent decarboxylation of 2-oxoglutarate and the subsequent addition of the resulting succinic semialdehyde-thiamine pyrophosphate anion to isochorismate to yield 2-succinyl-5-enolpyruvyl-6-hydroxy-3-cyclohexene-1-carboxylate (SEPHCHC). In Clavibacter michiganensis subsp. michiganensis (strain NCPPB 382), this protein is 2-succinyl-5-enolpyruvyl-6-hydroxy-3-cyclohexene-1-carboxylate synthase.